Here is a 125-residue protein sequence, read N- to C-terminus: Translation initiation factor 5A (125 aa).

Lysine 35 carries the hypusine modification.

It belongs to the eIF-5A family.

It localises to the cytoplasm. Functions by promoting the formation of the first peptide bond. In Methanosphaerula palustris (strain ATCC BAA-1556 / DSM 19958 / E1-9c), this protein is Translation initiation factor 5A (eIF5A).